A 94-amino-acid polypeptide reads, in one-letter code: Putative gene 47 protein (94 aa).

In Bacillus subtilis (Bacteriophage SP01), this protein is Putative gene 47 protein (47).